We begin with the raw amino-acid sequence, 257 residues long: Glucosamine-6-phosphate deaminase (257 aa).

The active-site Proton acceptor; for enolization step is the aspartate 64. Asparagine 133 functions as the For ring-opening step in the catalytic mechanism. Histidine 135 acts as the Proton acceptor; for ring-opening step in catalysis. Catalysis depends on glutamate 140, which acts as the For ring-opening step.

It belongs to the glucosamine/galactosamine-6-phosphate isomerase family. NagB subfamily.

The enzyme catalyses alpha-D-glucosamine 6-phosphate + H2O = beta-D-fructose 6-phosphate + NH4(+). It functions in the pathway amino-sugar metabolism; N-acetylneuraminate degradation; D-fructose 6-phosphate from N-acetylneuraminate: step 5/5. Catalyzes the reversible isomerization-deamination of glucosamine 6-phosphate (GlcN6P) to form fructose 6-phosphate (Fru6P) and ammonium ion. The sequence is that of Glucosamine-6-phosphate deaminase from Corynebacterium urealyticum (strain ATCC 43042 / DSM 7109).